Here is a 491-residue protein sequence, read N- to C-terminus: Cobyric acid synthase (491 aa).

One can recognise a GATase cobBQ-type domain in the interval 253–429 (AHRVAVVRLP…WHGSLEGDAL (177 aa)). The active-site Nucleophile is the Cys-334. His-421 is a catalytic residue.

The protein belongs to the CobB/CobQ family. CobQ subfamily.

The protein operates within cofactor biosynthesis; adenosylcobalamin biosynthesis. Its function is as follows. Catalyzes amidations at positions B, D, E, and G on adenosylcobyrinic A,C-diamide. NH(2) groups are provided by glutamine, and one molecule of ATP is hydrogenolyzed for each amidation. The sequence is that of Cobyric acid synthase from Mycobacterium ulcerans (strain Agy99).